A 678-amino-acid polypeptide reads, in one-letter code: Beta-catenin-like protein hmp-2 (678 aa).

5 ARM repeats span residues 153-192 (RGGP…NLLM), 280-319 (PSNK…RNLS), 320-359 (DSAT…NLTC), 362-403 (TRNK…HCTA), and 409-448 (EEAQ…NSAL).

This sequence belongs to the beta-catenin family. As to quaternary structure, component of a core catenin-cadherin complex consisting of hmr-1, hmp-1 and hmp-2; the complex localizes to adherens junctions. Interacts with hmr-1; the interaction is direct. May interact with hmp-1. Interacts with frk-1. Epidermal cells.

It is found in the cell junction. It localises to the adherens junction. Required for cell migration during body enclosure and cell shape changes during body elongation. Plays a role in recruitment of the cadherin protein hmr-1 to adherens junctions. The polypeptide is Beta-catenin-like protein hmp-2 (hmp-2) (Caenorhabditis elegans).